The chain runs to 498 residues: tRNA-2-methylthio-N(6)-dimethylallyladenosine synthase (498 aa).

Residues 2-118 (PRYSITTFGC…LPGLLGDLAI (117 aa)) form the MTTase N-terminal domain. [4Fe-4S] cluster is bound by residues C11, C47, C81, C163, C167, and C170. Residues 149–393 (PRAAPTAFVT…FEESEALLAA (245 aa)) form the Radical SAM core domain. The TRAM domain maps to 396–467 (SALVGTTQEV…KHSLQAELTE (72 aa)). Residues 469–498 (ARAAARPRQRGGLEPRPARRSLPVVAAEGG) form a disordered region.

Belongs to the methylthiotransferase family. MiaB subfamily. Monomer. [4Fe-4S] cluster serves as cofactor.

Its subcellular location is the cytoplasm. The enzyme catalyses N(6)-dimethylallyladenosine(37) in tRNA + (sulfur carrier)-SH + AH2 + 2 S-adenosyl-L-methionine = 2-methylsulfanyl-N(6)-dimethylallyladenosine(37) in tRNA + (sulfur carrier)-H + 5'-deoxyadenosine + L-methionine + A + S-adenosyl-L-homocysteine + 2 H(+). Its function is as follows. Catalyzes the methylthiolation of N6-(dimethylallyl)adenosine (i(6)A), leading to the formation of 2-methylthio-N6-(dimethylallyl)adenosine (ms(2)i(6)A) at position 37 in tRNAs that read codons beginning with uridine. In Sorangium cellulosum (strain So ce56) (Polyangium cellulosum (strain So ce56)), this protein is tRNA-2-methylthio-N(6)-dimethylallyladenosine synthase.